We begin with the raw amino-acid sequence, 131 residues long: Small ribosomal subunit protein uS8 (131 aa).

This sequence belongs to the universal ribosomal protein uS8 family. Part of the 30S ribosomal subunit. Contacts proteins S5 and S12.

Its function is as follows. One of the primary rRNA binding proteins, it binds directly to 16S rRNA central domain where it helps coordinate assembly of the platform of the 30S subunit. In Prosthecochloris aestuarii (strain DSM 271 / SK 413), this protein is Small ribosomal subunit protein uS8.